A 418-amino-acid polypeptide reads, in one-letter code: F-box/kelch-repeat protein SKIP20 (418 aa).

The 48-residue stretch at 14 to 61 folds into the F-box domain; the sequence is DLIPGLPEELAIECLVRVPFQFHSSIKSVCRSWKCVISSRSFIKERIG. The tract at residues 79–104 is disordered; sequence PSPAMMEGGEMSQKKKEEEEGESQMT. 4 Kelch repeats span residues 104–150, 153–206, 208–255, and 258–314; these read TQQL…AIQD, KVLL…SVGS, KVYV…SMAT, and GFCV…EFPG.

In terms of assembly, part of a SCF (ASK-cullin-F-box) protein ligase complex. Interacts with SKP1A/ASK1 and SPK1B/ASK2.

The protein resides in the nucleus. It functions in the pathway protein modification; protein ubiquitination. Component of SCF(ASK-cullin-F-box) E3 ubiquitin ligase complexes, which may mediate the ubiquitination and subsequent proteasomal degradation of target proteins. This is F-box/kelch-repeat protein SKIP20 (SKIP20) from Arabidopsis thaliana (Mouse-ear cress).